Here is a 491-residue protein sequence, read N- to C-terminus: Glutamyl-tRNA(Gln) amidotransferase subunit A (491 aa).

Residues Lys78 and Ser158 each act as charge relay system in the active site. Ser182 acts as the Acyl-ester intermediate in catalysis.

It belongs to the amidase family. GatA subfamily. As to quaternary structure, heterotrimer of A, B and C subunits.

It catalyses the reaction L-glutamyl-tRNA(Gln) + L-glutamine + ATP + H2O = L-glutaminyl-tRNA(Gln) + L-glutamate + ADP + phosphate + H(+). Functionally, allows the formation of correctly charged Gln-tRNA(Gln) through the transamidation of misacylated Glu-tRNA(Gln) in organisms which lack glutaminyl-tRNA synthetase. The reaction takes place in the presence of glutamine and ATP through an activated gamma-phospho-Glu-tRNA(Gln). The polypeptide is Glutamyl-tRNA(Gln) amidotransferase subunit A (Bradyrhizobium sp. (strain ORS 278)).